The following is a 416-amino-acid chain: Serine hydroxymethyltransferase (416 aa).

(6S)-5,6,7,8-tetrahydrofolate-binding positions include Leu-121 and 125-127 (GHL). N6-(pyridoxal phosphate)lysine is present on Lys-229.

It belongs to the SHMT family. In terms of assembly, homodimer. It depends on pyridoxal 5'-phosphate as a cofactor.

It localises to the cytoplasm. It catalyses the reaction (6R)-5,10-methylene-5,6,7,8-tetrahydrofolate + glycine + H2O = (6S)-5,6,7,8-tetrahydrofolate + L-serine. It functions in the pathway one-carbon metabolism; tetrahydrofolate interconversion. Its pathway is amino-acid biosynthesis; glycine biosynthesis; glycine from L-serine: step 1/1. Catalyzes the reversible interconversion of serine and glycine with tetrahydrofolate (THF) serving as the one-carbon carrier. This reaction serves as the major source of one-carbon groups required for the biosynthesis of purines, thymidylate, methionine, and other important biomolecules. Also exhibits THF-independent aldolase activity toward beta-hydroxyamino acids, producing glycine and aldehydes, via a retro-aldol mechanism. The protein is Serine hydroxymethyltransferase of Neisseria meningitidis serogroup B (strain ATCC BAA-335 / MC58).